The primary structure comprises 308 residues: 4-hydroxyproline 2-epimerase (308 aa).

C88 serves as the catalytic Proton acceptor. Substrate contacts are provided by residues 89 to 90 (GH), H208, and D232. C236 serves as the catalytic Proton donor. Residue 237–238 (GT) participates in substrate binding.

It belongs to the proline racemase family.

The catalysed reaction is trans-4-hydroxy-L-proline = cis-4-hydroxy-D-proline. Functionally, catalyzes the epimerization of trans-4-hydroxy-L-proline (t4LHyp) to cis-4-hydroxy-D-proline (c4DHyp). Is likely involved in a degradation pathway that converts t4LHyp to alpha-ketoglutarate. Can also catalyze the epimerization of trans-3-hydroxy-L-proline (t3LHyp) to cis-3-hydroxy-D-proline (c3DHyp), albeit with 19-fold lower efficiency. Displays no proline racemase activity. The chain is 4-hydroxyproline 2-epimerase from Chromobacterium violaceum (strain ATCC 12472 / DSM 30191 / JCM 1249 / CCUG 213 / NBRC 12614 / NCIMB 9131 / NCTC 9757 / MK).